The following is a 311-amino-acid chain: Olfactory receptor 2M4 (311 aa).

Topologically, residues 1–25 (MVWENQTFNSIFILLGIFNHSPTHT) are extracellular. The N-linked (GlcNAc...) asparagine glycan is linked to Asn5. Residues 26 to 49 (FLFSLVLGIFSLALMENISMVLLI) form a helical membrane-spanning segment. Residues 50 to 57 (YIEKQLHT) lie on the Cytoplasmic side of the membrane. Residues 58 to 79 (PMYFLLSQLSLMDLMLICTTLP) traverse the membrane as a helical segment. Residues 80 to 100 (KMIFSYLSGKKSISLAGCGTQ) are Extracellular-facing. Cys97 and Cys189 are disulfide-bonded. A helical transmembrane segment spans residues 101–120 (IFFYVSLLGAECFLLAVMAY). Topologically, residues 121–139 (DRYVAICHPLQYTILMNPK) are cytoplasmic. The chain crosses the membrane as a helical span at residues 140–158 (LCVFMTVASWTLGSLDGII). The Extracellular segment spans residues 159 to 195 (VLAAVLSFSYCSSLEIHHFFCDVAALLPLSCTETSAF). The chain crosses the membrane as a helical span at residues 196–219 (ERLLVICCVVMLIFPVSVIILSYS). Residues 220–236 (HVLRAVIHMGSGESRRK) lie on the Cytoplasmic side of the membrane. The chain crosses the membrane as a helical span at residues 237 to 259 (AFTTCSSHLSVVGLYYGAAMFMY). The Extracellular portion of the chain corresponds to 260-272 (MRPASKHTPDQDK). The chain crosses the membrane as a helical span at residues 273–292 (MVSAFYTILTPMLNPLIYSL). Topologically, residues 293–311 (RNKEVFRALQKVLKKRKLI) are cytoplasmic.

This sequence belongs to the G-protein coupled receptor 1 family.

The protein resides in the cell membrane. Functionally, odorant receptor. The chain is Olfactory receptor 2M4 (OR2M4) from Homo sapiens (Human).